The chain runs to 221 residues: Elongation factor Ts (221 aa).

The tract at residues 82–85 (TDFV) is involved in Mg(2+) ion dislocation from EF-Tu.

Belongs to the EF-Ts family.

The protein localises to the cytoplasm. Functionally, associates with the EF-Tu.GDP complex and induces the exchange of GDP to GTP. It remains bound to the aminoacyl-tRNA.EF-Tu.GTP complex up to the GTP hydrolysis stage on the ribosome. This Synechococcus elongatus (strain ATCC 33912 / PCC 7942 / FACHB-805) (Anacystis nidulans R2) protein is Elongation factor Ts.